Consider the following 518-residue polypeptide: Xaa-Pro aminopeptidase 3 (518 aa).

The transit peptide at 1 to 48 (MNNICKLNKFIISKSSSSLSSTSSKIKTNCLIKNAKMFSSSLNLNRFY) directs the protein to the mitochondrion. Residues Y314, D345, D356, H434, H441, E461, and E485 each coordinate substrate. Mn(2+) contacts are provided by D345, D356, and H434. Mn(2+) is bound by residues E461 and E485.

The protein belongs to the peptidase M24B family. Homodimer. Requires Mn(2+) as cofactor.

The protein localises to the mitochondrion. It is found in the cytoplasm. The enzyme catalyses Release of any N-terminal amino acid, including proline, that is linked to proline, even from a dipeptide or tripeptide.. Functionally, catalyzes the removal of a penultimate prolyl residue from the N-termini of peptides, such as Leu-Pro-Ala. Also shows low activity towards peptides with Ala or Ser at the P1 position. The protein is Xaa-Pro aminopeptidase 3 (xpnpep3) of Dictyostelium discoideum (Social amoeba).